A 109-amino-acid polypeptide reads, in one-letter code: uncharacterized protein (109 aa).

A helical membrane pass occupies residues 75–95 (LHFFFLFWLLNFILFFRIHLY).

The protein localises to the membrane. This is an uncharacterized protein from Schizosaccharomyces pombe (strain 972 / ATCC 24843) (Fission yeast).